The following is a 124-amino-acid chain: Snake venom vascular endothelial growth factor toxin apiscin (124 aa).

The signal sequence occupies residues 1–24; that stretch reads MAAYLLAVAILFCIQGWPSGTVQG. Gln25 is modified (pyrrolidone carboxylic acid). Intrachain disulfides connect Cys38/Cys80, Cys69/Cys115, and Cys73/Cys117.

This sequence belongs to the PDGF/VEGF growth factor family. Snake venom VEGF subfamily. In terms of assembly, homodimer; disulfide-linked. Interacts with VEGF receptor-1 (FLT1) with a high affinity, whereas it binds to VEGF receptor-2 (KDR) with a low affinity. Does not bind VEGF receptor-3 (FLT4). Expressed by the venom gland.

Its subcellular location is the secreted. In terms of biological role, snake venom VEGFs that may contribute to venom dispersion and prey subjugation by inducing vascular permeability and hypotension. This protein induces an increase in capillary permeability after intradermal injection, as well as a drastic hypotensive effect after intravenous injection. The hypotension is mediated by nitric oxide (NO), which is produced by VEGF-activated endothelium NO synthase. Also induces angiogenesis in vitro. Like other crotalid VEGFs, this protein interacts with VEGF receptor-1 (FLT1) with a high affinity, whereas it binds to VEGF receptor-2 (KDR) with a low affinity. The sequence is that of Snake venom vascular endothelial growth factor toxin apiscin from Agkistrodon piscivorus piscivorus (Eastern cottonmouth).